Consider the following 360-residue polypeptide: Phospho-N-acetylmuramoyl-pentapeptide-transferase (360 aa).

10 helical membrane passes run Tyr-21–Gly-41, Met-74–Gly-94, Tyr-97–Tyr-117, Leu-135–Ala-155, Val-168–Ser-188, Gly-199–Ser-219, Ala-236–Phe-256, Val-263–Leu-283, Ile-288–Val-308, and Val-338–Lys-358.

It belongs to the glycosyltransferase 4 family. MraY subfamily. Mg(2+) is required as a cofactor.

It localises to the cell inner membrane. It carries out the reaction UDP-N-acetyl-alpha-D-muramoyl-L-alanyl-gamma-D-glutamyl-meso-2,6-diaminopimeloyl-D-alanyl-D-alanine + di-trans,octa-cis-undecaprenyl phosphate = di-trans,octa-cis-undecaprenyl diphospho-N-acetyl-alpha-D-muramoyl-L-alanyl-D-glutamyl-meso-2,6-diaminopimeloyl-D-alanyl-D-alanine + UMP. Its pathway is cell wall biogenesis; peptidoglycan biosynthesis. Functionally, catalyzes the initial step of the lipid cycle reactions in the biosynthesis of the cell wall peptidoglycan: transfers peptidoglycan precursor phospho-MurNAc-pentapeptide from UDP-MurNAc-pentapeptide onto the lipid carrier undecaprenyl phosphate, yielding undecaprenyl-pyrophosphoryl-MurNAc-pentapeptide, known as lipid I. In Shewanella piezotolerans (strain WP3 / JCM 13877), this protein is Phospho-N-acetylmuramoyl-pentapeptide-transferase.